The following is a 582-amino-acid chain: MEPSKLFTMSDNATFAPGPVVNAADKKTFRTCFRILVLSVQAVTLILVIVTLGELVRMINDQGLSNQLSSIADKIRESATMIASAVGVMNQVIHGVTVSLPLQIEGNQNQLLSTLATIRTGKKQVSNCSTNIPLVNDLRFINGINKFIIEDYATHDFSIGHPLNMPSFIPTATSPNGCTRIPSFSLGKTHWCYTHNVINANCKDHTSSNQYISMGILVQTASGYPMFKTLKIQYLSDGLNRKSCSIATVPDGCAMYCYVSTQLETDDYAGSSPPTQKLTLLFYNDTVTERTISPTGLEGNWATLVPGVGSGIYFENKLIFPAYGGVLPNSTLGVKSAREFFRPVNPYNPCSGPQQDLDQRALRSYFPSYFSNRRVQSAFLVCAWNQILVTNCELVVPSNNQTLMGAEGRVLLINNRLLYYQRSTSWWPYELLYEISFTFTNSGQSSVNMSWIPIYSFTRPGSGNCSGENVCPTACVSGVYLDPWPLTPYSHQSGINRNFYFTGALLNSSTTRVNPTLYVSALNNLKVLAPYGNQGLFASYTTTTCFQDTGDASVYCVYIMELASNIVGEFQILPVLTRLTIT.

At 1 to 34 (MEPSKLFTMSDNATFAPGPVVNAADKKTFRTCFR) the chain is on the intravirion side. The chain crosses the membrane as a helical span at residues 35–55 (ILVLSVQAVTLILVIVTLGEL). At 56-582 (VRMINDQGLS…LPVLTRLTIT (527 aa)) the chain is on the virion surface side. 3 disulfides stabilise this stretch: Cys-178/Cys-202, Cys-192/Cys-253, and Cys-244/Cys-257. Residues Asn-284 and Asn-329 are each glycosylated (N-linked (GlcNAc...) asparagine; by host). 3 disulfide bridges follow: Cys-350/Cys-471, Cys-382/Cys-392, and Cys-465/Cys-475. N-linked (GlcNAc...) asparagine; by host glycans are attached at residues Asn-400 and Asn-448. The N-linked (GlcNAc...) asparagine; by host glycan is linked to Asn-507. Cys-545 and Cys-556 are disulfide-bonded.

It belongs to the paramyxoviruses hemagglutinin-neuraminidase family. As to quaternary structure, homotetramer; composed of disulfide-linked homodimers. Interacts with F protein trimer.

The protein resides in the virion membrane. It is found in the host cell membrane. The enzyme catalyses Hydrolysis of alpha-(2-&gt;3)-, alpha-(2-&gt;6)-, alpha-(2-&gt;8)- glycosidic linkages of terminal sialic acid residues in oligosaccharides, glycoproteins, glycolipids, colominic acid and synthetic substrates.. In terms of biological role, attaches the virus to alpha-2,3-linked sialic acid-containing cell receptors and thereby initiating infection. Binding of HN protein to the receptor induces a conformational change that allows the F protein to trigger virion/cell membranes fusion. Binds to the glycan motifs sialyl Lewis (SLe) and GM2 ganglioside (GM2-glycan). Its function is as follows. Neuraminidase activity ensures the efficient spread of the virus by dissociating the mature virions from the neuraminic acid containing glycoproteins. In Mumps orthorubulavirus (MuV), this protein is Hemagglutinin-neuraminidase.